The primary structure comprises 330 residues: Fructose-1,6-bisphosphatase class 1 (330 aa).

The Mg(2+) site is built by E84, D103, L105, and D106. Residues 106 to 109 (DGSS), N196, and K262 contribute to the substrate site. E268 is a Mg(2+) binding site.

This sequence belongs to the FBPase class 1 family. Homotetramer. The cofactor is Mg(2+).

Its subcellular location is the cytoplasm. It catalyses the reaction beta-D-fructose 1,6-bisphosphate + H2O = beta-D-fructose 6-phosphate + phosphate. It functions in the pathway carbohydrate biosynthesis; gluconeogenesis. This chain is Fructose-1,6-bisphosphatase class 1, found in Shewanella sp. (strain W3-18-1).